We begin with the raw amino-acid sequence, 1316 residues long: DNA-directed RNA polymerase subunit beta' (1316 aa).

Positions 60, 62, 75, and 78 each coordinate Zn(2+). Mg(2+) contacts are provided by D535, D537, and D539. Zn(2+) is bound by residues C891, C968, C975, and C978.

It belongs to the RNA polymerase beta' chain family. The RNAP catalytic core consists of 2 alpha, 1 beta, 1 beta' and 1 omega subunit. When a sigma factor is associated with the core the holoenzyme is formed, which can initiate transcription. It depends on Mg(2+) as a cofactor. Zn(2+) serves as cofactor.

The catalysed reaction is RNA(n) + a ribonucleoside 5'-triphosphate = RNA(n+1) + diphosphate. Its function is as follows. DNA-dependent RNA polymerase catalyzes the transcription of DNA into RNA using the four ribonucleoside triphosphates as substrates. This Mycobacterium marinum (strain ATCC BAA-535 / M) protein is DNA-directed RNA polymerase subunit beta'.